A 357-amino-acid chain; its full sequence is Mitogen-activated protein kinase kinase SIPKK (357 aa).

The Protein kinase domain occupies 70-330 (FEAVKVIGKG…ANELMRHPFI (261 aa)). ATP-binding positions include 76-84 (IGKGNGGIV) and Lys-99. Asp-192 acts as the Proton acceptor in catalysis.

This sequence belongs to the protein kinase superfamily. STE Ser/Thr protein kinase family. MAP kinase kinase subfamily. In terms of assembly, interacts with SIPK.

It carries out the reaction L-tyrosyl-[protein] + ATP = O-phospho-L-tyrosyl-[protein] + ADP + H(+). The catalysed reaction is L-seryl-[protein] + ATP = O-phospho-L-seryl-[protein] + ADP + H(+). It catalyses the reaction L-threonyl-[protein] + ATP = O-phospho-L-threonyl-[protein] + ADP + H(+). In terms of biological role, phosphorylates myelin basic protein (MBP) in vitro. May be involved in disease resistance. The sequence is that of Mitogen-activated protein kinase kinase SIPKK from Nicotiana tabacum (Common tobacco).